We begin with the raw amino-acid sequence, 284 residues long: MTAQLIDGNALSRQLRAEVAQRATALKARGTTPGLAVVLVGDNPASQVYVRNKVKACEDAGFHSVLEKYDASMTEAELLARVEALNNDPSIHGILVQLPLPAHIDDHKVIETISPLKDVDGFHVASAGALMVGEVGFKACTPYGCMKMLESIGMKDLRGKHAVVIGRSNIVGKPMAMMLLAANATVTICHSGTADLAAMTRQADIVVAAVGKRNVLTADMCKPGAVVIDVGMNRNDEGKLCGDVDFDGVKEVAGFITPVPGGVGPMTITMLLVNTMEAAERAAG.

NADP(+) is bound by residues 166-168 (GRS) and serine 191.

It belongs to the tetrahydrofolate dehydrogenase/cyclohydrolase family. Homodimer.

It catalyses the reaction (6R)-5,10-methylene-5,6,7,8-tetrahydrofolate + NADP(+) = (6R)-5,10-methenyltetrahydrofolate + NADPH. It carries out the reaction (6R)-5,10-methenyltetrahydrofolate + H2O = (6R)-10-formyltetrahydrofolate + H(+). It functions in the pathway one-carbon metabolism; tetrahydrofolate interconversion. Its function is as follows. Catalyzes the oxidation of 5,10-methylenetetrahydrofolate to 5,10-methenyltetrahydrofolate and then the hydrolysis of 5,10-methenyltetrahydrofolate to 10-formyltetrahydrofolate. This Delftia acidovorans (strain DSM 14801 / SPH-1) protein is Bifunctional protein FolD.